The following is a 175-amino-acid chain: Disulfide bond formation protein B 2 (175 aa).

At 1-9 (MYLARTRFL) the chain is on the cytoplasmic side. A helical membrane pass occupies residues 10–26 (FFLASLACASIIGVAFY). The Periplasmic portion of the chain corresponds to 27–44 (LQQAVGLDPCTLCMVQRA). A disulfide bond links Cys-36 and Cys-39. Residues 45–61 (AFIACGVLALCAACHAP) form a helical membrane-spanning segment. At 62–68 (GPTGTRR) the chain is on the cytoplasmic side. The helical transmembrane segment at 69–85 (YSLGLLLVALAGLAGAG) threads the bilayer. Residues 86 to 142 (TQVWLQTASADQLIPFITRLEQILSLLSLDMCIDRLRSDALFCAEITWTLFGISLPE) lie on the Periplasmic side of the membrane. A helical membrane pass occupies residues 143 to 161 (WSLLAFTGLALLPLYPLFS). Residues 162 to 175 (ELSHWLATRDRGGY) are Cytoplasmic-facing.

This sequence belongs to the DsbB family.

The protein localises to the cell inner membrane. Required for disulfide bond formation in some periplasmic proteins. Acts by oxidizing the DsbA protein. In Pseudomonas syringae pv. syringae (strain B728a), this protein is Disulfide bond formation protein B 2.